We begin with the raw amino-acid sequence, 317 residues long: 1D-myo-inositol 2-acetamido-2-deoxy-alpha-D-glucopyranoside deacetylase (317 aa).

Zn(2+)-binding residues include His-15, Asp-18, and His-154. The segment at 289 to 317 (QDLDNRNPNSQPPADQAREDHLLTGLGFA) is disordered.

It belongs to the MshB deacetylase family. Zn(2+) is required as a cofactor.

The catalysed reaction is 1D-myo-inositol 2-acetamido-2-deoxy-alpha-D-glucopyranoside + H2O = 1D-myo-inositol 2-amino-2-deoxy-alpha-D-glucopyranoside + acetate. Functionally, catalyzes the deacetylation of 1D-myo-inositol 2-acetamido-2-deoxy-alpha-D-glucopyranoside (GlcNAc-Ins) in the mycothiol biosynthesis pathway. The sequence is that of 1D-myo-inositol 2-acetamido-2-deoxy-alpha-D-glucopyranoside deacetylase from Segniliparus rotundus (strain ATCC BAA-972 / CDC 1076 / CIP 108378 / DSM 44985 / JCM 13578).